The sequence spans 393 residues: Formate-dependent phosphoribosylglycinamide formyltransferase (393 aa).

Residues 22 to 23 (EL) and E82 contribute to the N(1)-(5-phospho-beta-D-ribosyl)glycinamide site. Residues R114, K155, 160-165 (SSGKGQ), 195-198 (EGFI), and E203 contribute to the ATP site. An ATP-grasp domain is found at 119–308 (RLAAEELKLP…QFALHARAIL (190 aa)). Residues E267 and E279 each contribute to the Mg(2+) site. N(1)-(5-phospho-beta-D-ribosyl)glycinamide-binding positions include D286, K356, and 363–364 (RR).

Belongs to the PurK/PurT family. Homodimer.

It catalyses the reaction N(1)-(5-phospho-beta-D-ribosyl)glycinamide + formate + ATP = N(2)-formyl-N(1)-(5-phospho-beta-D-ribosyl)glycinamide + ADP + phosphate + H(+). It participates in purine metabolism; IMP biosynthesis via de novo pathway; N(2)-formyl-N(1)-(5-phospho-D-ribosyl)glycinamide from N(1)-(5-phospho-D-ribosyl)glycinamide (formate route): step 1/1. Functionally, involved in the de novo purine biosynthesis. Catalyzes the transfer of formate to 5-phospho-ribosyl-glycinamide (GAR), producing 5-phospho-ribosyl-N-formylglycinamide (FGAR). Formate is provided by PurU via hydrolysis of 10-formyl-tetrahydrofolate. The polypeptide is Formate-dependent phosphoribosylglycinamide formyltransferase (Pseudomonas syringae pv. tomato (strain ATCC BAA-871 / DC3000)).